A 345-amino-acid polypeptide reads, in one-letter code: S-adenosylmethionine:tRNA ribosyltransferase-isomerase (345 aa).

This sequence belongs to the QueA family. In terms of assembly, monomer.

It localises to the cytoplasm. It carries out the reaction 7-aminomethyl-7-carbaguanosine(34) in tRNA + S-adenosyl-L-methionine = epoxyqueuosine(34) in tRNA + adenine + L-methionine + 2 H(+). It functions in the pathway tRNA modification; tRNA-queuosine biosynthesis. Its function is as follows. Transfers and isomerizes the ribose moiety from AdoMet to the 7-aminomethyl group of 7-deazaguanine (preQ1-tRNA) to give epoxyqueuosine (oQ-tRNA). This is S-adenosylmethionine:tRNA ribosyltransferase-isomerase from Shewanella sp. (strain ANA-3).